Reading from the N-terminus, the 458-residue chain is MDFTFDSDDNKNAVIKVIGVGGAGGNAVNRMIDEGVQGVSFIAANTDVQALNSNKAENKIQLGPKLTRGLGAGSHPEVGQKAAEESQQTIEDSLKGADMIFITAGMGGGTGTGAAPVIAKIARETGALTVGVVTRPFTFEGPKRSKNAAEGIAQLKQYVDTLVIIANNRLLEMVDKKTPMMDAFKEADNVLRQGVQGISDLITSTDYVNLDFADVKTVMENQGAALMGIGRASGENRTVEATKLAISSPLLEVSIDGAKQVLLNITGGPDLTLFEAQDASDIVSKAAGDGVNIIFGTSINANLGDEVVVTVIATGIDSKAEEEASKQPMRRPSRPARQEVVTPEPTKSEQPEVSKAASVDDTEVKVANTISHEAPTQSIPEVKAEKKESQDTLLDPTSVWKQDRKENNRPQPVENKEKDDDEFDSFSSDDSTSISQIETSVDDESDNDIPFFKHRRQD.

Residues 22–26, 109–111, Glu-140, Arg-144, and Asp-188 contribute to the GTP site; these read GAGGN and GTG. The tract at residues 319–458 is disordered; sequence KAEEEASKQP…IPFFKHRRQD (140 aa). The span at 368-379 shows a compositional bias: polar residues; that stretch reads NTISHEAPTQSI. Basic and acidic residues predominate over residues 401–418; it reads KQDRKENNRPQPVENKEK. Positions 425-439 are enriched in low complexity; that stretch reads SFSSDDSTSISQIET.

It belongs to the FtsZ family. As to quaternary structure, homodimer. Polymerizes to form a dynamic ring structure in a strictly GTP-dependent manner. Interacts directly with several other division proteins.

It localises to the cytoplasm. Its function is as follows. Essential cell division protein that forms a contractile ring structure (Z ring) at the future cell division site. The regulation of the ring assembly controls the timing and the location of cell division. One of the functions of the FtsZ ring is to recruit other cell division proteins to the septum to produce a new cell wall between the dividing cells. Binds GTP and shows GTPase activity. In Lactobacillus johnsonii (strain CNCM I-12250 / La1 / NCC 533), this protein is Cell division protein FtsZ.